Reading from the N-terminus, the 170-residue chain is Ribosome maturation factor RimM (170 aa).

The 73-residue stretch at 98–170 (PDEYYWVDLE…RIVVDWDPEF (73 aa)) folds into the PRC barrel domain.

The protein belongs to the RimM family. Binds ribosomal protein uS19.

It is found in the cytoplasm. An accessory protein needed during the final step in the assembly of 30S ribosomal subunit, possibly for assembly of the head region. Essential for efficient processing of 16S rRNA. May be needed both before and after RbfA during the maturation of 16S rRNA. It has affinity for free ribosomal 30S subunits but not for 70S ribosomes. The protein is Ribosome maturation factor RimM of Xylella fastidiosa (strain 9a5c).